The following is an 83-amino-acid chain: Large ribosomal subunit protein eL43 (83 aa).

Residues Cys-38, Cys-41, Cys-56, and Cys-59 each coordinate Zn(2+). The C4-type zinc finger occupies 38-59; it reads CPVCGRRAVKRISTGIWQCTKC.

Belongs to the eukaryotic ribosomal protein eL43 family. Putative zinc-binding subfamily. In terms of assembly, part of the 50S ribosomal subunit. Zn(2+) is required as a cofactor.

Binds to the 23S rRNA. The protein is Large ribosomal subunit protein eL43 of Pyrococcus horikoshii (strain ATCC 700860 / DSM 12428 / JCM 9974 / NBRC 100139 / OT-3).